The primary structure comprises 175 residues: Probable tail fiber assembly protein (175 aa).

This sequence belongs to the tfa family.

Its function is as follows. Acts catalytically in the formation of tail protein dimers. The chain is Probable tail fiber assembly protein (G) from Escherichia phage P2 (Bacteriophage P2).